A 147-amino-acid chain; its full sequence is Small ribosomal subunit protein bS6m (147 aa).

It belongs to the bacterial ribosomal protein bS6 family. Component of the mitochondrial ribosome small subunit (28S) which comprises a 12S rRNA and about 30 distinct proteins.

It localises to the mitochondrion. This Drosophila melanogaster (Fruit fly) protein is Small ribosomal subunit protein bS6m (mRpS6).